The following is an 868-amino-acid chain: mRNA-capping enzyme (868 aa).

Lysine 282 serves as the catalytic N6-GMP-lysine intermediate. The mRNA cap 0 methyltransferase domain maps to 594 to 868 (GIYRAQTALI…LFGFICLRKN (275 aa)). Residues lysine 607, glycine 624, aspartate 646, and 710–712 (LFI) contribute to the S-adenosyl-L-methionine site.

The protein in the N-terminal section; belongs to the dsDNA virus mRNA guanylyltransferase family. This sequence in the C-terminal section; belongs to the class I-like SAM-binding methyltransferase superfamily. mRNA cap 0 methyltransferase family. Part of the viral DNA-directed RNA polymerase that consists of 8 polII-like subunits (RPB1, RPB2, RPB3, RPB5, RPB6, RPB7, RPB9, RPB10), a capping enzyme and a termination factor.

Its subcellular location is the virion. The enzyme catalyses a 5'-end triphospho-ribonucleoside in mRNA + H2O = a 5'-end diphospho-ribonucleoside in mRNA + phosphate + H(+). The catalysed reaction is a 5'-end diphospho-ribonucleoside in mRNA + GTP + H(+) = a 5'-end (5'-triphosphoguanosine)-ribonucleoside in mRNA + diphosphate. It carries out the reaction a 5'-end (5'-triphosphoguanosine)-ribonucleoside in mRNA + S-adenosyl-L-methionine = a 5'-end (N(7)-methyl 5'-triphosphoguanosine)-ribonucleoside in mRNA + S-adenosyl-L-homocysteine. Its pathway is mRNA processing; mRNA capping. Its function is as follows. Probably catalyzes the second reaction in the mRNA cap formation pathway. Forms a covalent complex with GTP. This chain is mRNA-capping enzyme, found in Ornithodoros (relapsing fever ticks).